Reading from the N-terminus, the 94-residue chain is Cytochrome b-c1 complex subunit 8, mitochondrial (94 aa).

Over 2–49 (GPPSGKTYMGWWGHMGGPKQKGITSYAVSPYAQKPLQGIFHNAVFNSF) the chain is Mitochondrial matrix. A helical membrane pass occupies residues 50 to 80 (RRFKSQFLYVLIPAGIYWYWWKNGNEYNEFL). Over 81–94 (YSKAGREELERVNV) the chain is Mitochondrial intermembrane.

The protein belongs to the UQCRQ/QCR8 family. As to quaternary structure, component of the ubiquinol-cytochrome c oxidoreductase (cytochrome b-c1 complex, complex III, CIII), a multisubunit enzyme composed of 10 subunits. The complex is composed of 3 respiratory subunits cytochrome b (COB), cytochrome c1 (CYT1) and Rieske protein (RIP1), 2 core protein subunits COR1 and QCR2, and 5 low-molecular weight protein subunits QCR6, QCR7, QCR8, QCR9 and QCR10. The complex exists as an obligatory dimer and forms supercomplexes (SCs) in the inner mitochondrial membrane with a monomer or a dimer of cytochrome c oxidase (complex IV, CIV), resulting in 2 different assemblies (supercomplexes III(2)IV and III(2)IV(2)).

Its subcellular location is the mitochondrion inner membrane. Functionally, component of the ubiquinol-cytochrome c oxidoreductase, a multisubunit transmembrane complex that is part of the mitochondrial electron transport chain which drives oxidative phosphorylation. The respiratory chain contains 3 multisubunit complexes succinate dehydrogenase (complex II, CII), ubiquinol-cytochrome c oxidoreductase (cytochrome b-c1 complex, complex III, CIII) and cytochrome c oxidase (complex IV, CIV), that cooperate to transfer electrons derived from NADH and succinate to molecular oxygen, creating an electrochemical gradient over the inner membrane that drives transmembrane transport and the ATP synthase. The cytochrome b-c1 complex catalyzes electron transfer from ubiquinol to cytochrome c, linking this redox reaction to translocation of protons across the mitochondrial inner membrane, with protons being carried across the membrane as hydrogens on the quinol. In the process called Q cycle, 2 protons are consumed from the matrix, 4 protons are released into the intermembrane space and 2 electrons are passed to cytochrome c. This chain is Cytochrome b-c1 complex subunit 8, mitochondrial (QCR8), found in Saccharomyces cerevisiae (strain ATCC 204508 / S288c) (Baker's yeast).